The following is a 372-amino-acid chain: MNDKKELKLILVAARNQLSSNDIKSLIAYLESDDCEFEISLQISEPTEQPELLELHRLVAIPALIKVSPAPKQIFAGSNIFSQLQKWLPRWTQEGLTKNLGINLQPSKIDSIRTQKEFLLEDELLVLRQENETLTKRIESQERLLRMVAHELRTPLTAATLAVQSQKLGQIDISKLQEVIKRRLEEIELLSQDLLEVGTTKWEALFNPQKIDLGNISAEVILELEKFWRLRNIEIDTDIPSDLPSVFADQRRMRQVFLNLIENAIKFSRDSGSIKITMIHKTNQWVEITICDKGAGIPLSEQKRIFLDRVRLPQTSEGTSGFGIGLSVCRRIVQVHGGRIWVVSEVGVGSCFHFTVPVWQGQNKEQQYLTKG.

The Histidine kinase domain maps to 147–360 (MVAHELRTPL…CFHFTVPVWQ (214 aa)). H150 carries the phosphohistidine; by autocatalysis modification.

As to quaternary structure, homooligomerizes. Interacts with KaiC. Participates in the KaiBC complex, whose core is composed of a KaiC homohexamer and 6 KaiB.

It carries out the reaction ATP + protein L-histidine = ADP + protein N-phospho-L-histidine.. Its function is as follows. Member of the two-component regulatory system SasA/RpaA involved in genome-wide circadian gene expression. One of several clock output pathways. Participates in the Kai clock protein complex, the main circadian regulator in cyanobacteria, via its interaction with KaiC. KaiC enhances the autophosphorylation activity of SasA, which then transfers its phosphate group to RpaA to activate it. In addition to its output function, recruits fold-shifted KaiB (KaiB(fs)) to KaiC to cooperatively form the KaiB(6):KaiC(6) complex (independent of SasA kinase activity). Required for robustness of the circadian rhythm of gene expression and is involved in clock output, also required for adaptation to light/dark cycles. In Prochlorococcus marinus (strain MIT 9301), this protein is Adaptive-response sensory kinase SasA.